A 306-amino-acid polypeptide reads, in one-letter code: Beta-lactamase 1 (306 aa).

An N-terminal signal peptide occupies residues 1–27 (MILKNKRMLKIGICVGILGLSITSLEA). The Acyl-ester intermediate role is filled by Ser-91. Glu-187 acts as the Proton acceptor in catalysis. Substrate is bound at residue 253–255 (KSG).

The protein belongs to the class-A beta-lactamase family.

The enzyme catalyses a beta-lactam + H2O = a substituted beta-amino acid. Functionally, this protein is a beta-lactamase with a substrate specificity for penicillins. This chain is Beta-lactamase 1 (blaY), found in Bacillus cereus.